The sequence spans 356 residues: uncharacterized protein (356 aa).

This is an uncharacterized protein from Acanthamoeba polyphaga (Amoeba).